The following is a 266-amino-acid chain: Vitamin B12-binding protein (266 aa).

Positions 1–22 (MAKSLFRALVALSFLAPLWLNA) are cleaved as a signal peptide. The region spanning 25 to 266 (RVITLSPANT…QLCNALSQVD (242 aa)) is the Fe/B12 periplasmic-binding domain. Residues Y50 and 242 to 246 (DWFER) each bind cyanocob(III)alamin. Residues C183 and C259 are joined by a disulfide bond.

It belongs to the BtuF family. The complex is composed of two ATP-binding proteins (BtuD), two transmembrane proteins (BtuC) and a solute-binding protein (BtuF).

It is found in the periplasm. Functionally, part of the ABC transporter complex BtuCDF involved in vitamin B12 import. Binds vitamin B12 and delivers it to the periplasmic surface of BtuC. The polypeptide is Vitamin B12-binding protein (Shigella flexneri).